The sequence spans 668 residues: uncharacterized protein (668 aa).

Helical transmembrane passes span 182–202 (FAFA…GILG), 208–228 (PYSY…IQFW), 286–306 (VPLF…AFIV), 321–341 (IVSL…TFIY), 379–399 (ALFL…PHYI), 430–450 (IYFL…VPQL), 499–519 (FVLM…APIF), 557–577 (LSLL…FYSS), and 587–607 (VIAA…RMFI).

The protein resides in the membrane. This is an uncharacterized protein from Schizosaccharomyces pombe (strain 972 / ATCC 24843) (Fission yeast).